The chain runs to 80 residues: Sec-independent protein translocase protein TatA (80 aa).

The helical transmembrane segment at 1-21 threads the bilayer; sequence MGQIGIWQILIIALVILVLFG. Residues 38–80 are disordered; sequence SFKKGLNEEDKPAEPAAKIEGPSHEAKPAGEAAKDPRPADKQG. Over residues 58–80 the composition is skewed to basic and acidic residues; sequence GPSHEAKPAGEAAKDPRPADKQG.

Belongs to the TatA/E family. As to quaternary structure, the Tat system comprises two distinct complexes: a TatABC complex, containing multiple copies of TatA, TatB and TatC subunits, and a separate TatA complex, containing only TatA subunits. Substrates initially bind to the TatABC complex, which probably triggers association of the separate TatA complex to form the active translocon.

It is found in the cell inner membrane. In terms of biological role, part of the twin-arginine translocation (Tat) system that transports large folded proteins containing a characteristic twin-arginine motif in their signal peptide across membranes. TatA could form the protein-conducting channel of the Tat system. The polypeptide is Sec-independent protein translocase protein TatA (Erythrobacter litoralis (strain HTCC2594)).